Here is a 700-residue protein sequence, read N- to C-terminus: Elongation factor G (700 aa).

The 283-residue stretch at 8–290 folds into the tr-type G domain; that stretch reads ERYRNIGISA…AVIDYLPAPT (283 aa). Residues 17–24, 88–92, and 142–145 contribute to the GTP site; these read AHIDAGKT, DTPGH, and NKMD.

It belongs to the TRAFAC class translation factor GTPase superfamily. Classic translation factor GTPase family. EF-G/EF-2 subfamily.

It is found in the cytoplasm. Catalyzes the GTP-dependent ribosomal translocation step during translation elongation. During this step, the ribosome changes from the pre-translocational (PRE) to the post-translocational (POST) state as the newly formed A-site-bound peptidyl-tRNA and P-site-bound deacylated tRNA move to the P and E sites, respectively. Catalyzes the coordinated movement of the two tRNA molecules, the mRNA and conformational changes in the ribosome. In Pasteurella multocida (strain Pm70), this protein is Elongation factor G (fusA).